Reading from the N-terminus, the 304-residue chain is MSQQRTLNNTIRATGVGLHSGNKIHITLRPAPVNHGIVFRRVDLDPVVEIPASGDLVTEVILCTGLTRNGAKVQTVEHLMSAFAGLGIDNAIVDLSSAELPIMDGSSAPFVFLLQSAGILEQNAAKRFIRIKRSVEVRQGDKVAKFSPYDGYKLGFTIEFDHPMIPHKQSYYEMEFSTAAYIKEISLARTFGFMHDLEDMRERNLGLGGSMDNAILLDDFRVLNEDGLRYGNEFVRHKILDAIGDLYLIGGPILGAYEAFKSGHALNNKLVRAVLADETSWEWISFPSPAAEQPPVVYTHPACI.

Residues histidine 78, histidine 237, and aspartate 241 each coordinate Zn(2+). Histidine 264 acts as the Proton donor in catalysis.

This sequence belongs to the LpxC family. Zn(2+) serves as cofactor.

It catalyses the reaction a UDP-3-O-[(3R)-3-hydroxyacyl]-N-acetyl-alpha-D-glucosamine + H2O = a UDP-3-O-[(3R)-3-hydroxyacyl]-alpha-D-glucosamine + acetate. It functions in the pathway glycolipid biosynthesis; lipid IV(A) biosynthesis; lipid IV(A) from (3R)-3-hydroxytetradecanoyl-[acyl-carrier-protein] and UDP-N-acetyl-alpha-D-glucosamine: step 2/6. Functionally, catalyzes the hydrolysis of UDP-3-O-myristoyl-N-acetylglucosamine to form UDP-3-O-myristoylglucosamine and acetate, the committed step in lipid A biosynthesis. This Xylella fastidiosa (strain Temecula1 / ATCC 700964) protein is UDP-3-O-acyl-N-acetylglucosamine deacetylase.